The following is a 196-amino-acid chain: Small ribosomal subunit protein uS4c (196 aa).

Residues 15 to 43 form a disordered region; sequence LGALPGLTRKTPKSGSNQKKKFHSGKKEQ. The region spanning 89–150 is the S4 RNA-binding domain; it reads MRLDNILFRL…NQRSKRLVQN (62 aa).

This sequence belongs to the universal ribosomal protein uS4 family. As to quaternary structure, part of the 30S ribosomal subunit. Contacts protein S5. The interaction surface between S4 and S5 is involved in control of translational fidelity.

It localises to the plastid. It is found in the chloroplast. One of the primary rRNA binding proteins, it binds directly to 16S rRNA where it nucleates assembly of the body of the 30S subunit. In terms of biological role, with S5 and S12 plays an important role in translational accuracy. The polypeptide is Small ribosomal subunit protein uS4c (rps4) (Bothriochloa ischaemum (Yellow bluestem)).